Consider the following 112-residue polypeptide: UPF0060 membrane protein SAV_4756 (112 aa).

A run of 4 helical transmembrane segments spans residues 8 to 28 (ALFVAAALFEIGGAWLVWQGV), 33 to 53 (GWLWIGAGVMALGVYGFVATL), 62 to 82 (ILAAYGGVFVAGSLAWGMVAD), and 91 to 111 (VTGALICLAGMTVIMYAPRGG).

The protein belongs to the UPF0060 family.

Its subcellular location is the cell membrane. The chain is UPF0060 membrane protein SAV_4756 from Streptomyces avermitilis (strain ATCC 31267 / DSM 46492 / JCM 5070 / NBRC 14893 / NCIMB 12804 / NRRL 8165 / MA-4680).